A 113-amino-acid polypeptide reads, in one-letter code: Large ribosomal subunit protein bL19 (113 aa).

The protein belongs to the bacterial ribosomal protein bL19 family.

This protein is located at the 30S-50S ribosomal subunit interface and may play a role in the structure and function of the aminoacyl-tRNA binding site. The protein is Large ribosomal subunit protein bL19 of Corynebacterium jeikeium (strain K411).